The sequence spans 74 residues: Large ribosomal subunit protein bL31 (74 aa).

Residues Cys16, Cys18, Cys38, and Cys41 each contribute to the Zn(2+) site.

Belongs to the bacterial ribosomal protein bL31 family. Type A subfamily. In terms of assembly, part of the 50S ribosomal subunit. The cofactor is Zn(2+).

Its function is as follows. Binds the 23S rRNA. The protein is Large ribosomal subunit protein bL31 of Acinetobacter baylyi (strain ATCC 33305 / BD413 / ADP1).